The following is a 439-amino-acid chain: Serine hydroxymethyltransferase (439 aa).

The tract at residues 1–20 (MNAPHRDETTASHRDDGFFT) is disordered. Residues Leu136 and 140-142 (GHL) contribute to the (6S)-5,6,7,8-tetrahydrofolate site. The residue at position 245 (Lys245) is an N6-(pyridoxal phosphate)lysine.

It belongs to the SHMT family. Homodimer. Pyridoxal 5'-phosphate serves as cofactor.

It localises to the cytoplasm. It carries out the reaction (6R)-5,10-methylene-5,6,7,8-tetrahydrofolate + glycine + H2O = (6S)-5,6,7,8-tetrahydrofolate + L-serine. It functions in the pathway one-carbon metabolism; tetrahydrofolate interconversion. The protein operates within amino-acid biosynthesis; glycine biosynthesis; glycine from L-serine: step 1/1. Catalyzes the reversible interconversion of serine and glycine with tetrahydrofolate (THF) serving as the one-carbon carrier. This reaction serves as the major source of one-carbon groups required for the biosynthesis of purines, thymidylate, methionine, and other important biomolecules. Also exhibits THF-independent aldolase activity toward beta-hydroxyamino acids, producing glycine and aldehydes, via a retro-aldol mechanism. In Jannaschia sp. (strain CCS1), this protein is Serine hydroxymethyltransferase.